A 121-amino-acid polypeptide reads, in one-letter code: Putative ferredoxin (121 aa).

To E.coli YkgJ.

This chain is Putative ferredoxin, found in Acinetobacter calcoaceticus.